The sequence spans 130 residues: Small ribosomal subunit protein uS9 (130 aa).

The protein belongs to the universal ribosomal protein uS9 family.

The sequence is that of Small ribosomal subunit protein uS9 from Pseudomonas entomophila (strain L48).